A 208-amino-acid chain; its full sequence is GTP cyclohydrolase 1 (208 aa).

Zn(2+) is bound by residues Cys98, His101, and Cys169.

It belongs to the GTP cyclohydrolase I family. Toroid-shaped homodecamer, composed of two pentamers of five dimers.

The catalysed reaction is GTP + H2O = 7,8-dihydroneopterin 3'-triphosphate + formate + H(+). Its pathway is cofactor biosynthesis; 7,8-dihydroneopterin triphosphate biosynthesis; 7,8-dihydroneopterin triphosphate from GTP: step 1/1. The protein is GTP cyclohydrolase 1 of Agrobacterium fabrum (strain C58 / ATCC 33970) (Agrobacterium tumefaciens (strain C58)).